Here is a 293-residue protein sequence, read N- to C-terminus: Urease accessory protein UreD (293 aa).

It belongs to the UreD family. In terms of assembly, ureD, UreF and UreG form a complex that acts as a GTP-hydrolysis-dependent molecular chaperone, activating the urease apoprotein by helping to assemble the nickel containing metallocenter of UreC. The UreE protein probably delivers the nickel.

It localises to the cytoplasm. Its function is as follows. Required for maturation of urease via the functional incorporation of the urease nickel metallocenter. The protein is Urease accessory protein UreD of Cupriavidus metallidurans (strain ATCC 43123 / DSM 2839 / NBRC 102507 / CH34) (Ralstonia metallidurans).